The chain runs to 706 residues: Fatty acid oxidation complex subunit alpha (706 aa).

The tract at residues 1-188 is enoyl-CoA hydratase; that stretch reads MDKSFTLNRL…KMGLVDDVVP (188 aa). The 3-hydroxyacyl-CoA dehydrogenase stretch occupies residues 308–706; the sequence is KAVNKVMVLG…MAESGSKFYE (399 aa).

The protein in the N-terminal section; belongs to the enoyl-CoA hydratase/isomerase family. In the central section; belongs to the 3-hydroxyacyl-CoA dehydrogenase family. In terms of assembly, heterotetramer of two alpha chains (FadJ) and two beta chains (FadI).

The protein resides in the cytoplasm. The enzyme catalyses a (3S)-3-hydroxyacyl-CoA = a (2E)-enoyl-CoA + H2O. It carries out the reaction a 4-saturated-(3S)-3-hydroxyacyl-CoA = a (3E)-enoyl-CoA + H2O. It catalyses the reaction a (3S)-3-hydroxyacyl-CoA + NAD(+) = a 3-oxoacyl-CoA + NADH + H(+). The catalysed reaction is (3S)-3-hydroxybutanoyl-CoA = (3R)-3-hydroxybutanoyl-CoA. It functions in the pathway lipid metabolism; fatty acid beta-oxidation. Catalyzes the formation of a hydroxyacyl-CoA by addition of water on enoyl-CoA. Also exhibits 3-hydroxyacyl-CoA epimerase and 3-hydroxyacyl-CoA dehydrogenase activities. In Shewanella loihica (strain ATCC BAA-1088 / PV-4), this protein is Fatty acid oxidation complex subunit alpha.